We begin with the raw amino-acid sequence, 363 residues long: MSMDVTFLGTGAAYPSPTRGASAVVLRCEGECWLFDCGEGTQTQLMKSQLKAGRITKIFITHLHGDHFFGLPGLLCTISLQSGSMVSKQPIEIYGPVGLRDFIWRTMELSHTELVFHYVVHELVPTADQCPAEELKEFAHVNRADSPPKEEQGRTILLDSEENSYLLFDDEQFVVKAFRLFHRIPSFGFSVVEKKRPGKLNAQKLKDLGVPPGPAYGKLKNGISVVLENGVTISPQDVLKKPIVGRKICILGDCSGVVGDGGVKLCFEADLLIHEATLDDAQMDKAKEHGHSTPQMAATFAKLCRAKRLVLTHFSQRYKPVALAREGETDGIAELKKQAESVLDLQEVTLAEDFMVISIPIKK.

Zn(2+)-binding residues include His62, His64, Asp66, His67, His182, Asp253, and His313. The active-site Proton acceptor is the Asp66.

It belongs to the RNase Z family. In terms of assembly, homodimer. The cofactor is Zn(2+). Widely expressed. Expressed in heart, brain, placenta, lung, liver, skeletal muscle, kidney and pancreas.

Its subcellular location is the cytoplasm. The protein localises to the cytosol. It is found in the nucleus. It catalyses the reaction Endonucleolytic cleavage of RNA, removing extra 3' nucleotides from tRNA precursor, generating 3' termini of tRNAs. A 3'-hydroxy group is left at the tRNA terminus and a 5'-phosphoryl group is left at the trailer molecule.. In terms of biological role, zinc phosphodiesterase, which displays some tRNA 3'-processing endonuclease activity. Specifically involved in tRNA repair: acts downstream of the ribosome-associated quality control (RQC) pathway by removing a 2',3'-cyclic phosphate from tRNAs following cleavage by ANKZF1. tRNAs are then processed by TRNT1. The protein is Zinc phosphodiesterase ELAC protein 1 of Homo sapiens (Human).